We begin with the raw amino-acid sequence, 741 residues long: 1,4-alpha-glucan branching enzyme GlgB 2 (741 aa).

The segment at 1 to 38 is disordered; the sequence is MALRDTSIPEPSGPVPPAPGACATAPPLDPTDRGRLLA. D421 (nucleophile) is an active-site residue. Residue E474 is the Proton donor of the active site.

It belongs to the glycosyl hydrolase 13 family. GlgB subfamily. As to quaternary structure, monomer.

The enzyme catalyses Transfers a segment of a (1-&gt;4)-alpha-D-glucan chain to a primary hydroxy group in a similar glucan chain.. It functions in the pathway glycan biosynthesis; glycogen biosynthesis. Its function is as follows. Catalyzes the formation of the alpha-1,6-glucosidic linkages in glycogen by scission of a 1,4-alpha-linked oligosaccharide from growing alpha-1,4-glucan chains and the subsequent attachment of the oligosaccharide to the alpha-1,6 position. This is 1,4-alpha-glucan branching enzyme GlgB 2 (glgB2) from Streptomyces coelicolor (strain ATCC BAA-471 / A3(2) / M145).